The primary structure comprises 457 residues: MEPITVIGGGLAGTEAAWQIARAGLPVVLYEMRPQVASPAHHTAELAELVCSNSFGAKASDRATGLLHHELRALGSLIIATADRHQVPAGGALAVDRAHFSRELTETLENHPLVTVRREELPHLPESGIVVLATGPLTSEALSADLQCFTGLDYLSFFDAASPIVVGESINREVAFLASRYDRGEAAYLNCPFSAEEYQRFWQALCEAKQAPLKDFERENAQFFEACLPVEELARRGVDTLRFGPLKPVGLRDPRTGERPYAVAQLRQEDRHGQLWNLVGFQTNLRWGEQQRVFRMIPGLEQAEFVRMGVMHRNTFLNAPKLLKASLQFRDRPTLLAAGQITGTEGYTAAAAGGWLAGTNAARLARGLAPLVLPPTTMAGALFHYISTAESKTFQPMPPNFGILPPLEQPVRQKALRYAAYRDRALKDLSTWATAMSLPLQPLALDGCDPAAVEAGA.

An FAD-binding site is contributed by 8 to 13 (GGGLAG).

It belongs to the MnmG family. TrmFO subfamily. Requires FAD as cofactor.

It localises to the cytoplasm. The catalysed reaction is uridine(54) in tRNA + (6R)-5,10-methylene-5,6,7,8-tetrahydrofolate + NADH + H(+) = 5-methyluridine(54) in tRNA + (6S)-5,6,7,8-tetrahydrofolate + NAD(+). The enzyme catalyses uridine(54) in tRNA + (6R)-5,10-methylene-5,6,7,8-tetrahydrofolate + NADPH + H(+) = 5-methyluridine(54) in tRNA + (6S)-5,6,7,8-tetrahydrofolate + NADP(+). Catalyzes the folate-dependent formation of 5-methyl-uridine at position 54 (M-5-U54) in all tRNAs. This chain is Methylenetetrahydrofolate--tRNA-(uracil-5-)-methyltransferase TrmFO, found in Thermosynechococcus vestitus (strain NIES-2133 / IAM M-273 / BP-1).